Here is a 1090-residue protein sequence, read N- to C-terminus: Exocyst complex component SEC5A (1090 aa).

The interval Leu18–Asp128 is disordered. Over residues Gln45–Lys69 the composition is skewed to low complexity. Positions Arg109 to Asp124 are enriched in basic and acidic residues. Phosphoserine is present on Ser180. Disordered stretches follow at residues Thr759–Gly783, Val987–Ser1010, and Ala1046–Arg1090. The segment covering Arg998 to Gln1009 has biased composition (basic and acidic residues). Residues Thr1058 to Pro1082 show a composition bias toward polar residues.

Belongs to the SEC5 family. The exocyst complex is composed of SEC3, SEC5, SEC6, SEC8, SEC10, EXO70A1 and EXO84B. Interacts with SEC3A and EXO70B1. Binds to EXO70H1 and EXO70B2. Binds directly to B1L.

The protein localises to the cytoplasm. Its subcellular location is the cytosol. It localises to the secreted. It is found in the extracellular exosome. In terms of biological role, component of the exocyst complex involved in the docking of exocytic vesicles with fusion sites on the plasma membrane during regulated or polarized secretion. Involved in polarized cell growth and organ morphogenesis. During cytokinesis, involved in cell plate initiation, cell plate maturation and formation of new primary cell wall. Probable component of an exocyst subcomplex specifically involved in autophagy-related, Golgi-independent membrane traffic to the vacuole. Regulates autophagosome formation and autophagy-related Golgi-independent import into the vacuole. The chain is Exocyst complex component SEC5A from Arabidopsis thaliana (Mouse-ear cress).